The sequence spans 518 residues: Cytochrome P450 monooxygenase ARMGADRAFT_1018417 (518 aa).

The chain crosses the membrane as a helical span at residues 3–23 (LFSAYALAFSLLMIPLILYIL). Cys-433 serves as a coordination point for heme. Asn-455 is a glycosylation site (N-linked (GlcNAc...) asparagine).

It belongs to the cytochrome P450 family. Requires heme as cofactor.

It localises to the membrane. It participates in secondary metabolite biosynthesis. Cytochrome P450 monooxygenase, part of the gene cluster that mediates the biosynthesis of melleolides, a range of antifungal and phytotoxic polyketide derivatives composed of an orsellinic acid (OA) moiety esterified to various sesquiterpene alcohols. The first step in melleolides biosynthesis is performed by the delta(6)-protoilludene synthase PRO1 which catalyzes the cyclization of farnesyl diphosphate to protoilludene. The orsellinic acid synthase armB produces OA by condensing acetyl-CoA with 3 malonyl-CoA units in a three-round chain elongation reaction folowed by a C2-C7 ring closure. ArmB further catalyzes the trans-esterification of OA to the various sesquiterpene alcohols resulting from the hydroxylation of protoilludene. The melleolides cluster also includes 5 cytochrome P450 monooxygenases, 4 NAD(+)-dependent oxidoreductases, one flavin-dependent oxidoreductase, and one O-methyltransferase. The cytochrome P450 monooxygenases may be involved in protoilludene hydroxylation to elaborate melleolides with multiple alcohol groups, such as melleolide D, which carries alcohol functionalities at C-4, C-5, C-10, and C-13. The role of the NAD(+)-dependent enzymes remains unknown. Numerous melleolides, including arnamial, show 5'-O-methylation of the aromatic moiety which may be catalyzed by the methyltransferase encoded in the cluster. The flavin-dependent oxidoreductase might represent the dehydrogenase yielding the aldehyde in position 1 of arnamial and other melleolides. Finally, several halogenase localized outside of the cluster, are able to catalyze the transfer of a single chlorine atom to the melleolide backbone, resulting in a 6'-chloromelleolide product. The sequence is that of Cytochrome P450 monooxygenase ARMGADRAFT_1018417 from Armillaria gallica (Bulbous honey fungus).